The sequence spans 747 residues: DNA ligase (747 aa).

Residues 113–117 (DRAYD), 161–162 (SI), and glutamate 190 each bind NAD(+). Lysine 192 acts as the N6-AMP-lysine intermediate in catalysis. Residues arginine 213, glutamate 249, lysine 364, and lysine 388 each contribute to the NAD(+) site. The Zn(2+) site is built by cysteine 479, cysteine 482, cysteine 495, and cysteine 501. Residues 660 to 747 (TTNAPLSDLT…EHDDTLTWPP (88 aa)) form the BRCT domain.

Belongs to the NAD-dependent DNA ligase family. LigA subfamily. The cofactor is Mg(2+). It depends on Mn(2+) as a cofactor.

The catalysed reaction is NAD(+) + (deoxyribonucleotide)n-3'-hydroxyl + 5'-phospho-(deoxyribonucleotide)m = (deoxyribonucleotide)n+m + AMP + beta-nicotinamide D-nucleotide.. In terms of biological role, DNA ligase that catalyzes the formation of phosphodiester linkages between 5'-phosphoryl and 3'-hydroxyl groups in double-stranded DNA using NAD as a coenzyme and as the energy source for the reaction. It is essential for DNA replication and repair of damaged DNA. This chain is DNA ligase, found in Haloquadratum walsbyi (strain DSM 16790 / HBSQ001).